We begin with the raw amino-acid sequence, 190 residues long: MLPINRQQHILKWLKEEGSLRISDISARFGVSEMTVYRDVNQLVQSNQVIKTAGGITLPVRTPQTDHMCSYCLKPVNQAHSVQLITVNQDIEQLCCAHCAFLRYADKTEEVSHLICRDFLLQTTVSAGSAYFVVNAELNLHCCQPQAIPFATLDHAERFQKGFGGAVCTFDQALEDMLQDRKKRCTCTKK.

In terms of domain architecture, HTH deoR-type spans 3 to 58 (PINRQQHILKWLKEEGSLRISDISARFGVSEMTVYRDVNQLVQSNQVIKTAGGITL). Positions 20–39 (LRISDISARFGVSEMTVYRD) form a DNA-binding region, H-T-H motif.

The protein resides in the cytoplasm. In terms of biological role, may act as a negative transcriptional regulator of cutJ/ycnJ in the presence of copper. May use copper as a corepressor. This Bacillus subtilis (strain 168) protein is HTH-type transcriptional repressor CutR.